Consider the following 213-residue polypeptide: MSRHPEVKWAQRIDKVYITVQLADAKDAKVNLEPEGVFSFSATAGTDGNLYESKLELNDKVNVEESKISVGVRSIFCIVEKAEAKWWKKLVRDDQKAPHFVKVDWDKWVDEDDDGADVNVDGMDFSNFGGMGGMGGMGGMGDMMGGMGGMGGMGGMAEMMGGMGGMGGMGGMGGMDEFEDESDDEEEVSKPQDAEKAAEAGKSQESDAKAETS.

Residues 2–91 form the CS domain; it reads SRHPEVKWAQ…AEAKWWKKLV (90 aa). The disordered stretch occupies residues 168–213; that stretch reads GMGGMGGMDEFEDESDDEEEVSKPQDAEKAAEAGKSQESDAKAETS. A compositionally biased stretch (acidic residues) spans 176–187; sequence DEFEDESDDEEE. The segment covering 188-213 has biased composition (basic and acidic residues); that stretch reads VSKPQDAEKAAEAGKSQESDAKAETS.

This sequence belongs to the p23/wos2 family.

This is an uncharacterized protein from Oryza sativa subsp. japonica (Rice).